The sequence spans 233 residues: MEDDEKCREFWSRVAESQGFDVEHLMDDKPKSCLLDYQNSDFDTEVFLNAKLGIHKYNMLQGTNLQLSCIEKCNSRITTVCIGYYITLVAKDPSAGGSLVTFQTKVVHEDYSKINTLTVYLARLKSQPPPDEEIGGAKTGLGSSILGTCIHPCKSVSSKSVETEENVKQPNERLKARNAVFYIRYRYYPNKGRAPKGNGHKPPRDRIAIIKRTMDIQGLLTLEFDTRYAKTLL.

The protein belongs to the UPF0725 (EMB2204) family.

The protein is UPF0725 protein At4g17990 of Arabidopsis thaliana (Mouse-ear cress).